A 167-amino-acid chain; its full sequence is Glutathione peroxidase-like peroxiredoxin 1 (167 aa).

Catalysis depends on Cys-36, which acts as the Cysteine sulfenic acid (-SOH) intermediate. Residues Cys-36 and Cys-82 are joined by a disulfide bond.

Belongs to the glutathione peroxidase family. As to quaternary structure, monomer.

It localises to the peroxisome matrix. The protein localises to the mitochondrion outer membrane. It carries out the reaction 2 glutathione + H2O2 = glutathione disulfide + 2 H2O. The catalysed reaction is a hydroperoxide + [thioredoxin]-dithiol = an alcohol + [thioredoxin]-disulfide + H2O. In terms of biological role, glutathione peroxidase-like protein that protects cells from phospholipid hydroperoxides and nonphospholipid peroxides during oxidative stress. Has peroxidase activity using thioredoxin or glutathione as a reducing power. Involved in peroxisome formation. This chain is Glutathione peroxidase-like peroxiredoxin 1, found in Saccharomyces cerevisiae (strain ATCC 204508 / S288c) (Baker's yeast).